A 151-amino-acid polypeptide reads, in one-letter code: NADH dehydrogenase [ubiquinone] 1 beta subcomplex subunit 11, mitochondrial (151 aa).

Residues methionine 1–tryptophan 29 constitute a mitochondrion transit peptide. The segment at serine 39–glutamate 62 is disordered. A helical transmembrane segment spans residues valine 87–leucine 107.

Belongs to the complex I NDUFB11 subunit family. Complex I is composed of 45 different subunits. Interacts with BCAP31.

The protein resides in the mitochondrion inner membrane. Its function is as follows. Accessory subunit of the mitochondrial membrane respiratory chain NADH dehydrogenase (Complex I), that is believed not to be involved in catalysis. Complex I functions in the transfer of electrons from NADH to the respiratory chain. The immediate electron acceptor for the enzyme is believed to be ubiquinone. The chain is NADH dehydrogenase [ubiquinone] 1 beta subcomplex subunit 11, mitochondrial (NDUFB11) from Cricetulus griseus (Chinese hamster).